A 303-amino-acid chain; its full sequence is Lipoyl synthase (303 aa).

7 residues coordinate [4Fe-4S] cluster: cysteine 40, cysteine 45, cysteine 51, cysteine 67, cysteine 71, cysteine 74, and serine 280. A Radical SAM core domain is found at 53–269 (AVRKTATFMI…KEIALSKGFS (217 aa)).

Belongs to the radical SAM superfamily. Lipoyl synthase family. The cofactor is [4Fe-4S] cluster.

It localises to the cytoplasm. The catalysed reaction is [[Fe-S] cluster scaffold protein carrying a second [4Fe-4S](2+) cluster] + N(6)-octanoyl-L-lysyl-[protein] + 2 oxidized [2Fe-2S]-[ferredoxin] + 2 S-adenosyl-L-methionine + 4 H(+) = [[Fe-S] cluster scaffold protein] + N(6)-[(R)-dihydrolipoyl]-L-lysyl-[protein] + 4 Fe(3+) + 2 hydrogen sulfide + 2 5'-deoxyadenosine + 2 L-methionine + 2 reduced [2Fe-2S]-[ferredoxin]. The protein operates within protein modification; protein lipoylation via endogenous pathway; protein N(6)-(lipoyl)lysine from octanoyl-[acyl-carrier-protein]. Its function is as follows. Catalyzes the radical-mediated insertion of two sulfur atoms into the C-6 and C-8 positions of the octanoyl moiety bound to the lipoyl domains of lipoate-dependent enzymes, thereby converting the octanoylated domains into lipoylated derivatives. The polypeptide is Lipoyl synthase (Halalkalibacterium halodurans (strain ATCC BAA-125 / DSM 18197 / FERM 7344 / JCM 9153 / C-125) (Bacillus halodurans)).